The chain runs to 696 residues: UvrABC system protein C (696 aa).

Residues T16 to V95 form the GIY-YIG domain. Positions D208–V243 constitute a UVR domain.

The protein belongs to the UvrC family. As to quaternary structure, interacts with UvrB in an incision complex.

It is found in the cytoplasm. The UvrABC repair system catalyzes the recognition and processing of DNA lesions. UvrC both incises the 5' and 3' sides of the lesion. The N-terminal half is responsible for the 3' incision and the C-terminal half is responsible for the 5' incision. The protein is UvrABC system protein C of Corynebacterium glutamicum (strain R).